Consider the following 282-residue polypeptide: NADPH-dependent 7-cyano-7-deazaguanine reductase (282 aa).

88–90 is a binding site for substrate; sequence IES. 90–91 serves as a coordination point for NADPH; the sequence is SK. The active-site Thioimide intermediate is Cys190. The active-site Proton donor is Asp197. Substrate is bound at residue 229–230; sequence HE. 258-259 lines the NADPH pocket; sequence RG.

It belongs to the GTP cyclohydrolase I family. QueF type 2 subfamily. In terms of assembly, homodimer.

The protein resides in the cytoplasm. The enzyme catalyses 7-aminomethyl-7-carbaguanine + 2 NADP(+) = 7-cyano-7-deazaguanine + 2 NADPH + 3 H(+). The protein operates within tRNA modification; tRNA-queuosine biosynthesis. Functionally, catalyzes the NADPH-dependent reduction of 7-cyano-7-deazaguanine (preQ0) to 7-aminomethyl-7-deazaguanine (preQ1). This Escherichia coli O127:H6 (strain E2348/69 / EPEC) protein is NADPH-dependent 7-cyano-7-deazaguanine reductase.